A 545-amino-acid chain; its full sequence is CWF19-like protein 1 homolog (545 aa).

The disordered stretch occupies residues 306 to 329; sequence YFYDMDGGRRKRQGGDNNKRDKRP.

This sequence belongs to the CWF19 family.

In Drosophila melanogaster (Fruit fly), this protein is CWF19-like protein 1 homolog.